The chain runs to 124 residues: MPRYELALILKAMQRPETAAALKRTLEALMDRGAVVRSLENLGERTLPYKMSAHSQRHTRGGYFLVDFYAPTTTVASIMEHLSRDIDVIRPNVVKHPLTQEVKECEGIVPVPLEEKLYSTKKRK.

The protein belongs to the bacterial ribosomal protein bS6 family. Component of the mitochondrial ribosome small subunit (28S) which comprises a 12S rRNA and about 30 distinct proteins.

It is found in the mitochondrion. This is Small ribosomal subunit protein bS6m (MRPS6) from Bos taurus (Bovine).